Consider the following 448-residue polypeptide: Homogentisate 1,2-dioxygenase (448 aa).

Histidine 303 functions as the Proton acceptor in the catalytic mechanism. Histidine 346 and glutamate 352 together coordinate Fe cation. Tyrosine 361 and histidine 382 together coordinate homogentisate. Residue histidine 382 participates in Fe cation binding.

The protein belongs to the homogentisate dioxygenase family. Hexamer; dimer of trimers. Fe cation serves as cofactor.

It catalyses the reaction homogentisate + O2 = 4-maleylacetoacetate + H(+). Its pathway is amino-acid degradation; L-phenylalanine degradation; acetoacetate and fumarate from L-phenylalanine: step 4/6. Functionally, involved in the catabolism of homogentisate (2,5-dihydroxyphenylacetate or 2,5-OH-PhAc), a central intermediate in the degradation of phenylalanine and tyrosine. Catalyzes the oxidative ring cleavage of the aromatic ring of homogentisate to yield maleylacetoacetate. The protein is Homogentisate 1,2-dioxygenase of Rhodopseudomonas palustris (strain TIE-1).